Consider the following 144-residue polypeptide: C-C motif chemokine 25 (144 aa).

The signal sequence occupies residues 1–23 (MKLWLFACLVACFVGAWMPVVHA). Intrachain disulfides connect Cys-30-Cys-58 and Cys-31-Cys-73. Residues 98–144 (KSASDSQTERKKSNHMKSKVENPNSTSVRSATLGHPRMVMMPRKTNN) form a disordered region. Over residues 118–127 (ENPNSTSVRS) the composition is skewed to polar residues.

This sequence belongs to the intercrine beta (chemokine CC) family. In terms of tissue distribution, specifically expressed by thymic dendritic cells. High levels in thymus and small intestine.

It localises to the secreted. Potentially involved in T-cell development. Recombinant protein shows chemotactic activity on thymocytes, macrophages, THP-1 cells, and dendritics cells but is inactive on peripheral blood lymphocytes and neutrophils. Binds to CCR9. Binds to atypical chemokine receptor ACKR4 and mediates the recruitment of beta-arrestin (ARRB1/2) to ACKR4. The polypeptide is C-C motif chemokine 25 (Ccl25) (Mus musculus (Mouse)).